The primary structure comprises 556 residues: ATP synthase subunit beta-1, mitochondrial (556 aa).

Residues 1–20 show a composition bias toward low complexity; it reads MASRRVLSSLLRSSSGRSAA. The segment at 1–37 is disordered; the sequence is MASRRVLSSLLRSSSGRSAAKLGNRNPRLPSPSPARH. A mitochondrion-targeting transit peptide spans 1–51; the sequence is MASRRVLSSLLRSSSGRSAAKLGNRNPRLPSPSPARHAAPCSYLLGRVAEY. Phosphoserine is present on serine 59. 231–238 serves as a coordination point for ATP; that stretch reads GGAGVGKT.

The protein belongs to the ATPase alpha/beta chains family. As to quaternary structure, F-type ATPases have 2 components, CF(1) - the catalytic core - and CF(0) - the membrane proton channel. CF(1) has five subunits: alpha(3), beta(3), gamma(1), delta(1), epsilon(1). CF(0) has three main subunits: a, b and c.

It is found in the mitochondrion. Its subcellular location is the mitochondrion inner membrane. The enzyme catalyses ATP + H2O + 4 H(+)(in) = ADP + phosphate + 5 H(+)(out). Its function is as follows. Mitochondrial membrane ATP synthase (F(1)F(0) ATP synthase or Complex V) produces ATP from ADP in the presence of a proton gradient across the membrane which is generated by electron transport complexes of the respiratory chain. F-type ATPases consist of two structural domains, F(1) - containing the extramembraneous catalytic core, and F(0) - containing the membrane proton channel, linked together by a central stalk and a peripheral stalk. During catalysis, ATP synthesis in the catalytic domain of F(1) is coupled via a rotary mechanism of the central stalk subunits to proton translocation. Subunits alpha and beta form the catalytic core in F(1). Rotation of the central stalk against the surrounding alpha(3)beta(3) subunits leads to hydrolysis of ATP in three separate catalytic sites on the beta subunits. This Arabidopsis thaliana (Mouse-ear cress) protein is ATP synthase subunit beta-1, mitochondrial.